Consider the following 159-residue polypeptide: Probable RNA-binding protein EIF1AD (159 aa).

An S1-like domain is found at methionine 18–threonine 93. Residues lysine 109–aspartate 159 are disordered. Acidic residues predominate over residues serine 146–aspartate 159.

The protein belongs to the EIF1AD family.

This is Probable RNA-binding protein EIF1AD from Drosophila melanogaster (Fruit fly).